Here is a 546-residue protein sequence, read N- to C-terminus: Histidine--tRNA ligase, mitochondrial (546 aa).

The N-terminal 20 residues, 1-20 (MLSRSLNKVVTSIKSSSIIR), are a transit peptide targeting the mitochondrion. Residues 129 to 131 (DLT), arginine 156, glutamine 172, aspartate 176, arginine 326, and 330 to 331 (YY) each bind L-histidine.

It belongs to the class-II aminoacyl-tRNA synthetase family.

The protein resides in the cytoplasm. Its subcellular location is the mitochondrion. It carries out the reaction tRNA(His) + L-histidine + ATP = L-histidyl-tRNA(His) + AMP + diphosphate + H(+). Its function is as follows. Catalyzes the aminoacylation of histidyl-tRNA in both the cytoplasm and the mitochondrion. The protein is Histidine--tRNA ligase, mitochondrial (HTS1) of Saccharomyces cerevisiae (strain ATCC 204508 / S288c) (Baker's yeast).